Here is a 217-residue protein sequence, read N- to C-terminus: Thiamine-phosphate synthase (217 aa).

Residues Gln41 to Lys45 and Asn76 each bind 4-amino-2-methyl-5-(diphosphooxymethyl)pyrimidine. Positions 77 and 96 each coordinate Mg(2+). Ser115 is a binding site for 4-amino-2-methyl-5-(diphosphooxymethyl)pyrimidine. Ser142–Ser144 lines the 2-[(2R,5Z)-2-carboxy-4-methylthiazol-5(2H)-ylidene]ethyl phosphate pocket. Lys145 contacts 4-amino-2-methyl-5-(diphosphooxymethyl)pyrimidine. 2-[(2R,5Z)-2-carboxy-4-methylthiazol-5(2H)-ylidene]ethyl phosphate is bound by residues Gly172 and Ile192–Ser193.

Belongs to the thiamine-phosphate synthase family. Mg(2+) is required as a cofactor.

It carries out the reaction 2-[(2R,5Z)-2-carboxy-4-methylthiazol-5(2H)-ylidene]ethyl phosphate + 4-amino-2-methyl-5-(diphosphooxymethyl)pyrimidine + 2 H(+) = thiamine phosphate + CO2 + diphosphate. It catalyses the reaction 2-(2-carboxy-4-methylthiazol-5-yl)ethyl phosphate + 4-amino-2-methyl-5-(diphosphooxymethyl)pyrimidine + 2 H(+) = thiamine phosphate + CO2 + diphosphate. The catalysed reaction is 4-methyl-5-(2-phosphooxyethyl)-thiazole + 4-amino-2-methyl-5-(diphosphooxymethyl)pyrimidine + H(+) = thiamine phosphate + diphosphate. The protein operates within cofactor biosynthesis; thiamine diphosphate biosynthesis; thiamine phosphate from 4-amino-2-methyl-5-diphosphomethylpyrimidine and 4-methyl-5-(2-phosphoethyl)-thiazole: step 1/1. Condenses 4-methyl-5-(beta-hydroxyethyl)thiazole monophosphate (THZ-P) and 2-methyl-4-amino-5-hydroxymethyl pyrimidine pyrophosphate (HMP-PP) to form thiamine monophosphate (TMP). The sequence is that of Thiamine-phosphate synthase from Acidithiobacillus ferrooxidans (strain ATCC 23270 / DSM 14882 / CIP 104768 / NCIMB 8455) (Ferrobacillus ferrooxidans (strain ATCC 23270)).